The chain runs to 288 residues: Threonine-rich protein (288 aa).

The N-terminal stretch at 1–20 (MKAFLLSLATLLACIVLTES) is a signal peptide. The span at 141–150 (TTVTPQTTDG) shows a compositional bias: polar residues. Residues 141 to 260 (TTVTPQTTDG…PAPTTTPAPT (120 aa)) form a disordered region. Residues 151 to 253 (NTTTEAPTST…TAAPTTTPAP (103 aa)) show a composition bias toward low complexity.

As to expression, component of the acid-insoluble and acid-soluble organic matrix of the aragonitic skeleton (at protein level).

It is found in the secreted. This is Threonine-rich protein from Acropora millepora (Staghorn coral).